The primary structure comprises 143 residues: Transcriptional regulator SlyA (143 aa).

The HTH marR-type domain occupies 2-135; it reads ESTLGSDLAR…LSTLVQKLEQ (134 aa). The H-T-H motif DNA-binding region spans 49–72; it reads QIQLAKAIGIEQPSLVRTLDQLEE.

Belongs to the SlyA family. In terms of assembly, homodimer.

Functionally, transcription regulator that can specifically activate or repress expression of target genes. Regulates the cpm operon, which contains cpmA, cpmB, cpmC, cpmD, cpmE, cpmF, cpmG and cpmH, involved in carbapenem-like antibiotic production. The polypeptide is Transcriptional regulator SlyA (Photorhabdus laumondii subsp. laumondii (strain DSM 15139 / CIP 105565 / TT01) (Photorhabdus luminescens subsp. laumondii)).